The chain runs to 109 residues: UPF0060 membrane protein YfjF (109 aa).

4 consecutive transmembrane segments (helical) span residues 6-26 (ILLFLAAGLAEIGGGYLVWLW), 32-52 (PAGYGIAGALILIVYGILPTF), 61-81 (VYAAYGGVFIVLAVLWGWLVD), and 87-107 (LYDWIGAFICLIGVCVILFAP).

It belongs to the UPF0060 family.

The protein localises to the cell membrane. The polypeptide is UPF0060 membrane protein YfjF (yfjF) (Bacillus subtilis (strain 168)).